The primary structure comprises 803 residues: Sensor histidine kinase CheAY (803 aa).

Histidine 47 is modified (phosphohistidine). Disordered stretches follow at residues 134-185 (LESA…DEPD) and 209-255 (EADK…ENKA). Composition is skewed to basic and acidic residues over residues 136-166 (SAKE…ENKA), 209-226 (EADK…KPKQ), and 233-254 (ETPK…EENK). Positions 270–517 (RLDHLMNLIG…TQKLKIPLTL (248 aa)) constitute a Histidine kinase domain. A Phosphohistidine; by autocatalysis modification is found at histidine 273. The 135-residue stretch at 519–653 (IIQALLVGVQ…VGAMMDMAKS (135 aa)) folds into the CheW-like domain. Residues 678–796 (IVLAIDDSST…YLTTVVKRSI (119 aa)) form the Response regulatory domain. Aspartate 729 bears the 4-aspartylphosphate mark.

In terms of processing, autophosphorylated.

It carries out the reaction ATP + protein L-histidine = ADP + protein N-phospho-L-histidine.. In terms of biological role, member of the two-component regulatory system CheAY/CheY that regulates chemotaxis and colonization of the gastric mucosa. Functions as a sensor protein kinase which is autophosphorylated at a histidine residue and transfers its phosphate group to the conserved aspartic acid residue in the regulatory domain of CheY. In turn, phosphorylated CheY (CheY-P) interacts with the flagellar motor protein FliM to cause clockwise flagellar rotation and bacterial reversals, as opposed to straight swimming when CheY is not phosphorylated. This is Sensor histidine kinase CheAY (cheAY) from Helicobacter pylori (strain ATCC 700392 / 26695) (Campylobacter pylori).